A 420-amino-acid chain; its full sequence is MAPK/MAK/MRK overlapping kinase (420 aa).

The region spanning tyrosine 4–phenylalanine 285 is the Protein kinase domain. ATP-binding positions include isoleucine 10–valine 18 and lysine 33. Residue aspartate 128 is the Proton acceptor of the active site. Residues proline 311–glutamine 322 show a composition bias toward polar residues. Residues proline 311 to threonine 344 form a disordered region. Residues glutamate 323 to alanine 338 are compositionally biased toward basic and acidic residues.

Belongs to the protein kinase superfamily. CMGC Ser/Thr protein kinase family. CDC2/CDKX subfamily. Requires Mg(2+) as cofactor. Autophosphorylated. As to expression, highly expressed in testis, and less in kidney, brain and lung.

The protein localises to the cytoplasm. It localises to the cell projection. It is found in the cilium. The protein resides in the nucleus. It catalyses the reaction L-seryl-[protein] + ATP = O-phospho-L-seryl-[protein] + ADP + H(+). It carries out the reaction L-threonyl-[protein] + ATP = O-phospho-L-threonyl-[protein] + ADP + H(+). Phosphorylation appears to increase the enzymatic activity. Its function is as follows. Able to phosphorylate several exogenous substrates and to undergo autophosphorylation. Negatively regulates cilium length in a cAMP and mTORC1 signaling-dependent manner. This is MAPK/MAK/MRK overlapping kinase (Mok) from Mus musculus (Mouse).